We begin with the raw amino-acid sequence, 308 residues long: Aspartate carbamoyltransferase catalytic subunit (308 aa).

2 residues coordinate carbamoyl phosphate: arginine 55 and threonine 56. Residue lysine 85 coordinates L-aspartate. Carbamoyl phosphate-binding residues include arginine 106, histidine 135, and glutamine 138. L-aspartate-binding residues include arginine 168 and arginine 229. Residues leucine 267 and proline 268 each coordinate carbamoyl phosphate.

The protein belongs to the aspartate/ornithine carbamoyltransferase superfamily. ATCase family. As to quaternary structure, heterododecamer (2C3:3R2) of six catalytic PyrB chains organized as two trimers (C3), and six regulatory PyrI chains organized as three dimers (R2).

It carries out the reaction carbamoyl phosphate + L-aspartate = N-carbamoyl-L-aspartate + phosphate + H(+). It functions in the pathway pyrimidine metabolism; UMP biosynthesis via de novo pathway; (S)-dihydroorotate from bicarbonate: step 2/3. In terms of biological role, catalyzes the condensation of carbamoyl phosphate and aspartate to form carbamoyl aspartate and inorganic phosphate, the committed step in the de novo pyrimidine nucleotide biosynthesis pathway. The polypeptide is Aspartate carbamoyltransferase catalytic subunit (Laribacter hongkongensis (strain HLHK9)).